We begin with the raw amino-acid sequence, 458 residues long: Bifunctional protein GlmU (458 aa).

The pyrophosphorylase stretch occupies residues 1 to 229 (MTNYAIILAA…FNESLGVNDR (229 aa)). Residues 8–11 (LAAG), Lys22, Gln72, and 77–78 (GT) contribute to the UDP-N-acetyl-alpha-D-glucosamine site. Asp102 is a binding site for Mg(2+). 4 residues coordinate UDP-N-acetyl-alpha-D-glucosamine: Gly139, Glu154, Asn169, and Asn227. A Mg(2+)-binding site is contributed by Asn227. A linker region spans residues 230-250 (VALATAESVMRRRINKAHMIN). Residues 251 to 458 (GVTFQNPDAT…AKRLPHYPQK (208 aa)) are N-acetyltransferase. UDP-N-acetyl-alpha-D-glucosamine contacts are provided by Arg332 and Lys350. His362 (proton acceptor) is an active-site residue. Residues Tyr365 and Asn376 each contribute to the UDP-N-acetyl-alpha-D-glucosamine site. Acetyl-CoA-binding positions include Ala379, 385-386 (NY), Ser404, Ala422, and Arg439.

The protein in the N-terminal section; belongs to the N-acetylglucosamine-1-phosphate uridyltransferase family. In the C-terminal section; belongs to the transferase hexapeptide repeat family. In terms of assembly, homotrimer. It depends on Mg(2+) as a cofactor.

The protein resides in the cytoplasm. It catalyses the reaction alpha-D-glucosamine 1-phosphate + acetyl-CoA = N-acetyl-alpha-D-glucosamine 1-phosphate + CoA + H(+). The catalysed reaction is N-acetyl-alpha-D-glucosamine 1-phosphate + UTP + H(+) = UDP-N-acetyl-alpha-D-glucosamine + diphosphate. It functions in the pathway nucleotide-sugar biosynthesis; UDP-N-acetyl-alpha-D-glucosamine biosynthesis; N-acetyl-alpha-D-glucosamine 1-phosphate from alpha-D-glucosamine 6-phosphate (route II): step 2/2. The protein operates within nucleotide-sugar biosynthesis; UDP-N-acetyl-alpha-D-glucosamine biosynthesis; UDP-N-acetyl-alpha-D-glucosamine from N-acetyl-alpha-D-glucosamine 1-phosphate: step 1/1. Its pathway is bacterial outer membrane biogenesis; LPS lipid A biosynthesis. In terms of biological role, catalyzes the last two sequential reactions in the de novo biosynthetic pathway for UDP-N-acetylglucosamine (UDP-GlcNAc). The C-terminal domain catalyzes the transfer of acetyl group from acetyl coenzyme A to glucosamine-1-phosphate (GlcN-1-P) to produce N-acetylglucosamine-1-phosphate (GlcNAc-1-P), which is converted into UDP-GlcNAc by the transfer of uridine 5-monophosphate (from uridine 5-triphosphate), a reaction catalyzed by the N-terminal domain. This is Bifunctional protein GlmU from Streptococcus uberis (strain ATCC BAA-854 / 0140J).